A 233-amino-acid polypeptide reads, in one-letter code: Octanoyltransferase (233 aa).

Residues 34–212 form the BPL/LPL catalytic domain; it reads PDRPDVLLLL…AFAQTFELDL (179 aa). Residues 76 to 83, 143 to 145, and 156 to 158 contribute to the substrate site; these read RGGEVTHH, AIG, and GFA. The active-site Acyl-thioester intermediate is the C174.

Belongs to the LipB family.

The protein resides in the cytoplasm. The enzyme catalyses octanoyl-[ACP] + L-lysyl-[protein] = N(6)-octanoyl-L-lysyl-[protein] + holo-[ACP] + H(+). It participates in protein modification; protein lipoylation via endogenous pathway; protein N(6)-(lipoyl)lysine from octanoyl-[acyl-carrier-protein]: step 1/2. In terms of biological role, catalyzes the transfer of endogenously produced octanoic acid from octanoyl-acyl-carrier-protein onto the lipoyl domains of lipoate-dependent enzymes. Lipoyl-ACP can also act as a substrate although octanoyl-ACP is likely to be the physiological substrate. The protein is Octanoyltransferase of Synechococcus elongatus (strain ATCC 33912 / PCC 7942 / FACHB-805) (Anacystis nidulans R2).